The following is a 324-amino-acid chain: Protein ChrB (324 aa).

Together with ChrA1, this protein reduces chromate accumulation and is essential for chromate resistance, possibly as a regulatory protein. The sequence is that of Protein ChrB from Cupriavidus metallidurans (strain ATCC 43123 / DSM 2839 / NBRC 102507 / CH34) (Ralstonia metallidurans).